Consider the following 363-residue polypeptide: Anhydro-N-acetylmuramic acid kinase (363 aa).

10-17 (GTSLDGLD) contributes to the ATP binding site.

It belongs to the anhydro-N-acetylmuramic acid kinase family.

It catalyses the reaction 1,6-anhydro-N-acetyl-beta-muramate + ATP + H2O = N-acetyl-D-muramate 6-phosphate + ADP + H(+). Its pathway is amino-sugar metabolism; 1,6-anhydro-N-acetylmuramate degradation. The protein operates within cell wall biogenesis; peptidoglycan recycling. In terms of biological role, catalyzes the specific phosphorylation of 1,6-anhydro-N-acetylmuramic acid (anhMurNAc) with the simultaneous cleavage of the 1,6-anhydro ring, generating MurNAc-6-P. Is required for the utilization of anhMurNAc either imported from the medium or derived from its own cell wall murein, and thus plays a role in cell wall recycling. This Pseudomonas fluorescens (strain Pf0-1) protein is Anhydro-N-acetylmuramic acid kinase.